The sequence spans 158 residues: Small ribosomal subunit protein uS9 (158 aa).

The segment covering 1-20 has biased composition (polar residues); the sequence is MSETMQSLDQLSALKTTQPD. Residues 1–29 form a disordered region; the sequence is MSETMQSLDQLSALKTTQPDAPTYTKKVD.

Belongs to the universal ribosomal protein uS9 family.

This is Small ribosomal subunit protein uS9 from Rhodopseudomonas palustris (strain BisB5).